A 1866-amino-acid polypeptide reads, in one-letter code: RNA1 polyprotein (1866 aa).

Residues 462–633 (LKGINDLEQL…KAYDAANFAS (172 aa)) enclose the SF3 helicase domain. Residue 494 to 501 (GKSRTGKS) participates in ATP binding. A helical membrane pass occupies residues 897-917 (LVGSGNGPVLMGVAAGAFSAE). At Ser-920 the chain carries O-(5'-phospho-RNA)-serine. Residues 945 to 1150 (DAQMSLDQSS…CASLLPPLEP (206 aa)) form the Peptidase C3 domain. Residues His-987, Glu-1023, and Cys-1113 each act as for picornain 3C-like protease activity in the active site. Residues 1429–1559 (NDVLCCDYSS…SVNAVVTPYF (131 aa)) form the RdRp catalytic domain.

Specific enzymatic cleavages by picornain 3C-like protease in vivo yield mature proteins. Picornain 3C-like protease is autocatalytically processed. Post-translationally, uridylylated by the polymerase and is covalently linked to the 5'-end of genomic RNA. This uridylylated form acts as a nucleotide-peptide primer for the polymerase.

The protein resides in the host membrane. Its subcellular location is the host cytoplasm. The protein localises to the host perinuclear region. It is found in the host endoplasmic reticulum. It carries out the reaction RNA(n) + a ribonucleoside 5'-triphosphate = RNA(n+1) + diphosphate. Thiol protease that cleaves the RNA1 and RNA2 polyproteins. Its function is as follows. Plays a role in RNA replication. It is covalently linked to the 5'terminus of both viral single-stranded RNA1 and RNA2 molecules. Functionally, down-regulates the RNA1 polyprotein processing and enhances trans-cleavage of RNA2 polyproteins. The protease cofactor and the putative helicase seem to target the replication complexes to ER membranes. Their physical association causes the membrane rearrangement of host ER that may result in formation of the small membranous vesicles that are the site of viral RNA synthesis. In terms of biological role, the protease cofactor and the putative helicase seem to target the replication complexes to ER membranes. Their physical association causes the membrane rearrangement of host ER that may result in formation of the small membranous vesicles that are the site of viral RNA synthesis. Replicates the viral genome. This chain is RNA1 polyprotein, found in Cajanus cajan (Pigeon pea).